The sequence spans 598 residues: Serine/threonine-protein kinase PLK1 (598 aa).

Positions 1–26 are disordered; it reads MAQVAGKKLTVAPEAGKPPGIPGSSS. A phosphoserine mark is found at S25 and S26. The region spanning 44–296 is the Protein kinase domain; that stretch reads YLRGRFLGKG…IDDLLNDEFF (253 aa). ATP contacts are provided by residues 50–58, K73, and E122; that span reads LGKGGFAKC. The Proton acceptor role is filled by D167. ATP contacts are provided by residues 169 to 172 and D185; that span reads KLGN. The activation loop stretch occupies residues 185 to 212; that stretch reads DFGLATKVEYDGERKKTLCGTPNYIAPE. T201 carries the phosphothreonine modification. Residues S260 and S326 each carry the phosphoserine; by autocatalysis modification. Residues 328-331 carry the D-box that targets the protein for proteasomal degradation in anaphase motif; that stretch reads RKPL. Residues 336–360 are disordered; it reads KGQDSPLVEKQSVPAKEEEMQQPES. S340 carries the post-translational modification Phosphoserine. Positions 404-482 constitute a POLO box 1 domain; it reads WVSKWVDYSD…LKYFRNYMSE (79 aa). Residues 487–501 are linker; it reads AGANITPREGDELAR. The region spanning 504 to 586 is the POLO box 2 domain; that stretch reads FLRTWFRTRS…ARTMVEKLQS (83 aa). The interval 532 to 534 is important for interaction with phosphorylated proteins; it reads HTK.

It belongs to the protein kinase superfamily. Ser/Thr protein kinase family. As to quaternary structure, interacts with plk1 and kif2a. Interacts with fbxo5. Activated by phosphorylation on Thr-201 during M phase. Post-translationally, protein levels are down-regulated by proteasomal degradation in anaphase.

The protein resides in the nucleus. Its subcellular location is the cytoplasm. The protein localises to the cytoskeleton. It is found in the microtubule organizing center. It localises to the centrosome. The protein resides in the spindle. Its subcellular location is the midbody. It carries out the reaction L-seryl-[protein] + ATP = O-phospho-L-seryl-[protein] + ADP + H(+). The catalysed reaction is L-threonyl-[protein] + ATP = O-phospho-L-threonyl-[protein] + ADP + H(+). Functionally, plays multiple essential roles during mitosis. Phosphorylates the N-terminal domain of cdc25, which leads to cyclin b-cdc2 activation and mitotic entry. Also required for organization of bipolar spindles, and for exit from mitosis. Phosphorylates tpx2. The polypeptide is Serine/threonine-protein kinase PLK1 (plk1) (Xenopus tropicalis (Western clawed frog)).